Consider the following 87-residue polypeptide: Small ribosomal subunit protein bS20 (87 aa).

Residues 1–23 (MANHKSAIKRHKQSVKRAARNRA) form a disordered region.

This sequence belongs to the bacterial ribosomal protein bS20 family.

In terms of biological role, binds directly to 16S ribosomal RNA. The sequence is that of Small ribosomal subunit protein bS20 from Oleidesulfovibrio alaskensis (strain ATCC BAA-1058 / DSM 17464 / G20) (Desulfovibrio alaskensis).